We begin with the raw amino-acid sequence, 161 residues long: MRIAIYPGSFDPVTYAHLDIARRATRIFDRVIMAVFDRPQKRLLFSTEERLHLLRTATADLDHVEAMSYNTLTVEFARQVGACAIVRGLRAGSDFEAEFQMAQVNQTIDPGIEVVVLMAGRPFAHISSTAVREMASLGRDPVEFTPPVVVAALREKFAQRG.

Ser-9 lines the substrate pocket. Residues 9–10 (SF) and His-17 contribute to the ATP site. The substrate site is built by Lys-41, Thr-73, and Arg-87. ATP is bound by residues 88 to 90 (GLR), Glu-98, and 123 to 129 (FAHISST).

Belongs to the bacterial CoaD family. As to quaternary structure, homohexamer. The cofactor is Mg(2+).

Its subcellular location is the cytoplasm. The enzyme catalyses (R)-4'-phosphopantetheine + ATP + H(+) = 3'-dephospho-CoA + diphosphate. The protein operates within cofactor biosynthesis; coenzyme A biosynthesis; CoA from (R)-pantothenate: step 4/5. Reversibly transfers an adenylyl group from ATP to 4'-phosphopantetheine, yielding dephospho-CoA (dPCoA) and pyrophosphate. The sequence is that of Phosphopantetheine adenylyltransferase from Chloroflexus aggregans (strain MD-66 / DSM 9485).